Reading from the N-terminus, the 171-residue chain is 3-hydroxydecanoyl-[acyl-carrier-protein] dehydratase (171 aa).

The active site involves His70.

This sequence belongs to the thioester dehydratase family. FabA subfamily. As to quaternary structure, homodimer.

It is found in the cytoplasm. The catalysed reaction is a (3R)-hydroxyacyl-[ACP] = a (2E)-enoyl-[ACP] + H2O. It catalyses the reaction (3R)-hydroxydecanoyl-[ACP] = (2E)-decenoyl-[ACP] + H2O. It carries out the reaction (2E)-decenoyl-[ACP] = (3Z)-decenoyl-[ACP]. Its pathway is lipid metabolism; fatty acid biosynthesis. In terms of biological role, necessary for the introduction of cis unsaturation into fatty acids. Catalyzes the dehydration of (3R)-3-hydroxydecanoyl-ACP to E-(2)-decenoyl-ACP and then its isomerization to Z-(3)-decenoyl-ACP. Can catalyze the dehydratase reaction for beta-hydroxyacyl-ACPs with saturated chain lengths up to 16:0, being most active on intermediate chain length. The chain is 3-hydroxydecanoyl-[acyl-carrier-protein] dehydratase from Shewanella frigidimarina (strain NCIMB 400).